A 110-amino-acid chain; its full sequence is Hydrogenase maturation factor HypA (110 aa).

H2 lines the Ni(2+) pocket. The Zn(2+) site is built by C70, C73, C86, and C89.

This sequence belongs to the HypA/HybF family.

In terms of biological role, involved in the maturation of [NiFe] hydrogenases. Required for nickel insertion into the metal center of the hydrogenase. The protein is Hydrogenase maturation factor HypA of Geotalea daltonii (strain DSM 22248 / JCM 15807 / FRC-32) (Geobacter daltonii).